The chain runs to 233 residues: B-cell lymphoma/leukemia 10 (233 aa).

The residue at position 1 (Met1) is an N-acetylmethionine. Residues 13–101 enclose the CARD domain; sequence LTEVKKDALE…QNFLIQKITD (89 aa). Residues Lys17, Lys31, and Lys63 each participate in a glycyl lysine isopeptide (Lys-Gly) (interchain with G-Cter in ubiquitin) cross-link. Over residues 130–141 the composition is skewed to polar residues; that stretch reads TNNLSRSNSDES. 2 disordered regions span residues 130–149 and 186–233; these read TNNL…KQRP and SFSS…LSRQ. Ser138 bears the Phosphoserine mark. Positions 195–205 are enriched in pro residues; it reads PGDPGAPPLPP.

In terms of assembly, homomultimer; homooligomerized following recruitment by CARD domain-containing proteins that form a nucleating helical template that recruits BCL10 via CARD-CARD interaction. Self-associates by CARD-CARD interaction and interacts with other CARD-proteins such as CARD9, CARD10, CARD11 and CARD14. Forms a complex with CARD14 and MALT1; resulting in the formation of a CBM (CARD14-BCL10-MALT1) complex. Forms a complex with CARD11 and MALT1; resulting in the formation of a CBM (CARD11-BCL10-MALT1) complex. Forms a complex with CARD9 and MALT1; resulting in the formation of a CBM (CARD9-BCL10-MALT1) complex. Found in a membrane raft complex, at least composed of BCL10, CARD11, DPP4 and IKBKB. Binds caspase-9 with its C-terminal domain. Interacts with TRAF2 and BIRC2/c-IAP2. Interacts with PELI2 and SOCS3; these interactions may be mutually exclusive. Phosphorylated. Phosphorylation results in dissociation from TRAF2 and binding to BIRC2/c-IAP2. Phosphorylated by IKBKB/IKKB. Post-translationally, ubiquitinated via both 'Lys-63'-linked and linear ('Met-1'-linked) polyubiquitin chains in response to T-cell receptor (TCR) activation. Ubiquitination is recognized by IKBKG/NEMO, the regulatory subunit of I-kappa-B kinase (IKK), and is required for TCR-induced NF-kappa-B activation. Linear ubiquitination at Lys-17, Lys-31 and Lys-63 is mediated by RNF31/HOIP; linear ubiquitination is recognized with much higher affinity than 'Lys-63'-linked ubiquitin by IKBKG/NEMO. CARD11 is required for linear ubiquitination by HOIP by promoting the targeting of BCL10 to RNF31/HOIP. In terms of processing, proteolytically cleaved by MALT1; required for T-cell activation.

It is found in the cytoplasm. Its subcellular location is the perinuclear region. The protein localises to the membrane raft. Functionally, plays a key role in both adaptive and innate immune signaling by bridging CARD domain-containing proteins to immune activation. Acts by channeling adaptive and innate immune signaling downstream of CARD domain-containing proteins CARD9, CARD11 and CARD14 to activate NF-kappa-B and MAP kinase p38 (MAPK11, MAPK12, MAPK13 and/or MAPK14) pathways which stimulate expression of genes encoding pro-inflammatory cytokines and chemokines. Recruited by activated CARD domain-containing proteins: homooligomerized CARD domain-containing proteins form a nucleating helical template that recruits BCL10 via CARD-CARD interaction, thereby promoting polymerization of BCL10, subsequent recruitment of MALT1 and formation of a CBM complex. This leads to activation of NF-kappa-B and MAP kinase p38 (MAPK11, MAPK12, MAPK13 and/or MAPK14) pathways which stimulate expression of genes encoding pro-inflammatory cytokines and chemokines. Activated by CARD9 downstream of C-type lectin receptors; CARD9-mediated signals are essential for antifungal immunity. Activated by CARD11 downstream of T-cell receptor (TCR) and B-cell receptor (BCR). Promotes apoptosis, pro-caspase-9 maturation and activation of NF-kappa-B via NIK and IKK. This chain is B-cell lymphoma/leukemia 10, found in Rattus norvegicus (Rat).